A 272-amino-acid chain; its full sequence is Eukaryotic translation initiation factor 3 subunit G (272 aa).

Disordered stretches follow at residues 1-28 (MPALDEIKSSWADEVELDSGSLPPPTEI) and 143-187 (AGKA…RGRD). In terms of domain architecture, RRM spans 190–268 (TAIRISNLSE…LILNVEWSKP (79 aa)).

It belongs to the eIF-3 subunit G family. Component of the eukaryotic translation initiation factor 3 (eIF-3) complex.

It localises to the cytoplasm. Its function is as follows. RNA-binding component of the eukaryotic translation initiation factor 3 (eIF-3) complex, which is involved in protein synthesis of a specialized repertoire of mRNAs and, together with other initiation factors, stimulates binding of mRNA and methionyl-tRNAi to the 40S ribosome. The eIF-3 complex specifically targets and initiates translation of a subset of mRNAs involved in cell proliferation. This subunit can bind 18S rRNA. This chain is Eukaryotic translation initiation factor 3 subunit G, found in Culex quinquefasciatus (Southern house mosquito).